A 209-amino-acid chain; its full sequence is Outer-membrane lipoprotein carrier protein (209 aa).

An N-terminal signal peptide occupies residues methionine 1–glycine 22.

This sequence belongs to the LolA family. In terms of assembly, monomer.

It localises to the periplasm. Functionally, participates in the translocation of lipoproteins from the inner membrane to the outer membrane. Only forms a complex with a lipoprotein if the residue after the N-terminal Cys is not an aspartate (The Asp acts as a targeting signal to indicate that the lipoprotein should stay in the inner membrane). The polypeptide is Outer-membrane lipoprotein carrier protein (Alcanivorax borkumensis (strain ATCC 700651 / DSM 11573 / NCIMB 13689 / SK2)).